The chain runs to 383 residues: Dephospho-CoA kinase (383 aa).

Residues 3-201 enclose the DPCK domain; it reads RIGLTGGMGA…RRLVPFERNL (199 aa). ATP is bound at residue 11–16; sequence GAGKST. The segment at 196 to 383 is UPF0157; sequence PFERNLRAAT…EVAERLLGTV (188 aa).

The protein in the N-terminal section; belongs to the CoaE family. In the C-terminal section; belongs to the UPF0157 (GrpB) family.

The protein resides in the cytoplasm. It catalyses the reaction 3'-dephospho-CoA + ATP = ADP + CoA + H(+). Its pathway is cofactor biosynthesis; coenzyme A biosynthesis; CoA from (R)-pantothenate: step 5/5. Its function is as follows. Catalyzes the phosphorylation of the 3'-hydroxyl group of dephosphocoenzyme A to form coenzyme A. The polypeptide is Dephospho-CoA kinase (Nocardia farcinica (strain IFM 10152)).